We begin with the raw amino-acid sequence, 355 residues long: dTDP-D-glucose 4,6-dehydratase (355 aa).

Thr-142 is a substrate binding site. Asp-143 functions as the Proton donor in the catalytic mechanism. Residues Glu-144 and Tyr-166 each act as proton acceptor in the active site.

It belongs to the NAD(P)-dependent epimerase/dehydratase family. dTDP-glucose dehydratase subfamily. It depends on NAD(+) as a cofactor.

The enzyme catalyses dTDP-alpha-D-glucose = dTDP-4-dehydro-6-deoxy-alpha-D-glucose + H2O. The sequence is that of dTDP-D-glucose 4,6-dehydratase (Tgds) from Mus musculus (Mouse).